A 469-amino-acid chain; its full sequence is Proline--tRNA ligase (469 aa).

This sequence belongs to the class-II aminoacyl-tRNA synthetase family. ProS type 3 subfamily. In terms of assembly, homodimer.

It localises to the cytoplasm. It catalyses the reaction tRNA(Pro) + L-proline + ATP = L-prolyl-tRNA(Pro) + AMP + diphosphate. Catalyzes the attachment of proline to tRNA(Pro) in a two-step reaction: proline is first activated by ATP to form Pro-AMP and then transferred to the acceptor end of tRNA(Pro). This is Proline--tRNA ligase from Methanobrevibacter smithii (strain ATCC 35061 / DSM 861 / OCM 144 / PS).